The primary structure comprises 90 residues: Barrier-to-autointegration factor (90 aa).

Phosphoserine is present on residues serine 2 and serine 3. Threonine 4 carries the phosphothreonine modification. Serine 5 is subject to Phosphoserine.

The protein belongs to the BAF family. In terms of assembly, homodimer.

It localises to the nucleus. The protein localises to the chromosome. The protein resides in the nucleus envelope. It is found in the cytoplasm. In terms of biological role, non-specific DNA-binding protein that plays key roles in mitotic nuclear reassembly, chromatin organization, DNA damage response, gene expression and intrinsic immunity against foreign DNA. Contains two non-specific double-stranded DNA (dsDNA)-binding sites which promote DNA cross-bridging. Plays a key role in nuclear membrane reformation at the end of mitosis by driving formation of a single nucleus in a spindle-independent manner. Transiently cross-bridges anaphase chromosomes via its ability to bridge distant DNA sites, leading to the formation of a dense chromatin network at the chromosome ensemble surface that limits membranes to the surface. Also acts as a negative regulator of innate immune activation by restricting CGAS activity toward self-DNA upon acute loss of nuclear membrane integrity. Outcompetes CGAS for DNA-binding, thereby preventing CGAS activation and subsequent damaging autoinflammatory responses. Also involved in DNA damage response; acts by inhibiting the ADP-ribosyltransferase activity of PARP1. Involved in the recognition of exogenous dsDNA in the cytosol: associates with exogenous dsDNA immediately after its appearance in the cytosol at endosome breakdown and is required to avoid autophagy. The polypeptide is Barrier-to-autointegration factor (banf1) (Danio rerio (Zebrafish)).